A 4011-amino-acid polypeptide reads, in one-letter code: Hybrid PKS-NRPS synthetase mycA (4011 aa).

In terms of domain architecture, Ketosynthase family 3 (KS3) spans 12 to 451; sequence NEPIAIIGSA…GANAHVILEN (440 aa). Active-site for beta-ketoacyl synthase activity residues include cysteine 185, histidine 324, and histidine 373. The segment at 576 to 903 is acyl transferase (AT) domain; the sequence is VFTGQGAQWA…PYTGTLSRGS (328 aa). Positions 977–1113 are N-terminal hotdog fold; it reads NPLLGRRIPD…GRVIVTLAGT (137 aa). A PKS/mFAS DH domain is found at 977-1290; the sequence is NPLLGRRIPD…ITPLATRTGQ (314 aa). Residues 978–1287 are dehydratase (DH) domain; the sequence is PLLGRRIPDG…GVRITPLATR (310 aa). Residue histidine 1009 is the Proton acceptor; for dehydratase activity of the active site. The tract at residues 1135–1290 is C-terminal hotdog fold; it reads TAEVREDEFY…ITPLATRTGQ (156 aa). Aspartate 1195 acts as the Proton donor; for dehydratase activity in catalysis. The interval 1434–1626 is methyltransferase (MT) domain; the sequence is YYVEALGIRE…FSGIDTITPE (193 aa). The tract at residues 2138 to 2311 is ketoreductase (KR)domain; sequence TYVLFGLTSD…AASVLHLGAV (174 aa). Positions 2429–2504 constitute a Carrier 1 domain; sequence DSFLQKLQIM…DLVAFAHEKL (76 aa). Serine 2464 bears the O-(pantetheine 4'-phosphoryl)serine mark. Residues 2519 to 2607 are disordered; it reads AAAAAAAERS…PREQDVERTA (89 aa). The segment covering 2559–2578 has biased composition (polar residues); sequence PASSSTGSDHPTSVTSSGHT. Positions 2604–2975 are condensation; sequence ERTAPMSLGQ…KPDSTLGSAP (372 aa). The interval 3009 to 3414 is adenylation; sequence IIQRNPDTIA…GELEILGRID (406 aa). A disordered region spans residues 3525-3544; it reads AKEEEEEKRPNGSSAAPLTQ. A compositionally biased stretch (polar residues) spans 3535–3544; the sequence is NGSSAAPLTQ. In terms of domain architecture, Carrier 2 spans 3541 to 3621; that stretch reads PLTQQELQLR…AMAAAVHDAA (81 aa). Serine 3581 bears the O-(pantetheine 4'-phosphoryl)serine mark. A reductase-like region spans residues 3671 to 3978; it reads VVILTGATGF…RTVPLGQWIE (308 aa).

This sequence in the C-terminal section; belongs to the NRP synthetase family.

It carries out the reaction L-leucine + 8 malonyl-CoA + 4 S-adenosyl-L-methionine + ATP + 9 NADPH + 12 H(+) = (5S)-5-(2-methylpropyl)-3-[(2E,6R,8E,10E,12E)-6,8,10,12-tetramethyltetradeca-2,8,10,12-tetraenoyl]-2,5-dihydro-1H-pyrrol-2-one + AMP + 4 S-adenosyl-L-homocysteine + 8 CO2 + diphosphate + 9 NADP(+) + 8 CoA + 7 H2O. Its pathway is mycotoxin biosynthesis. In terms of biological role, hybrid PKS-NRPS synthetase; part of the gene cluster that mediates the biosynthesis of myceliothermophins, mycotoxins that contain a trans-fused decalin ring system connected to a conjugated 3-pyrrolin-2-one moiety and that have potential anti-tumor properties. The polyketide synthase module (PKS) of the PKS-NRPS mycA is responsible for the synthesis of the octaketide backbone. The downstream nonribosomal peptide synthetase (NRPS) module then amidates the carboxyl end of the octaketide with a leucine. A reductase-like domain (R) at the C-terminus catalyzes the reductive release of the polyketide-amino acid intermediate. Because mycA lacks a designated enoylreductase (ER) domain, the required activity is provided the enoyl reductase mycC. Following mycA-catalyzed construction and release of aminoacyl polyketide aldehyde, Knoevenagel condensation yields the expected ketone. This C18 keto acyclic precursor is the substrate of the Diels-Alderase mycB, that catalyzes the Diels-Alder cycloaddition to produce myceliothermophin E. A yet unknown oxygenase involved in the production of myceliothermophin A, via substitution with a hydroxyl group at the C21, has still to be identified. The sequence is that of Hybrid PKS-NRPS synthetase mycA from Thermothelomyces thermophilus (strain ATCC 42464 / BCRC 31852 / DSM 1799) (Sporotrichum thermophile).